The sequence spans 117 residues: uncharacterized protein (117 aa).

This sequence to H.influenzae HI_1162 and to HI_0925.

This is an uncharacterized protein from Escherichia coli (strain K12).